We begin with the raw amino-acid sequence, 262 residues long: Tryptophan synthase alpha chain (262 aa).

Active-site proton acceptor residues include glutamate 48 and aspartate 59.

The protein belongs to the TrpA family. As to quaternary structure, tetramer of two alpha and two beta chains.

The enzyme catalyses (1S,2R)-1-C-(indol-3-yl)glycerol 3-phosphate + L-serine = D-glyceraldehyde 3-phosphate + L-tryptophan + H2O. It participates in amino-acid biosynthesis; L-tryptophan biosynthesis; L-tryptophan from chorismate: step 5/5. Functionally, the alpha subunit is responsible for the aldol cleavage of indoleglycerol phosphate to indole and glyceraldehyde 3-phosphate. The chain is Tryptophan synthase alpha chain from Helicobacter pylori (strain P12).